We begin with the raw amino-acid sequence, 315 residues long: Aspartate carbamoyltransferase catalytic subunit (315 aa).

2 residues coordinate carbamoyl phosphate: Arg64 and Thr65. An L-aspartate-binding site is contributed by Lys92. Arg114, His142, and Gln145 together coordinate carbamoyl phosphate. Positions 175 and 229 each coordinate L-aspartate. Gly270 and Pro271 together coordinate carbamoyl phosphate.

This sequence belongs to the aspartate/ornithine carbamoyltransferase superfamily. ATCase family. Heterododecamer (2C3:3R2) of six catalytic PyrB chains organized as two trimers (C3), and six regulatory PyrI chains organized as three dimers (R2).

The enzyme catalyses carbamoyl phosphate + L-aspartate = N-carbamoyl-L-aspartate + phosphate + H(+). The protein operates within pyrimidine metabolism; UMP biosynthesis via de novo pathway; (S)-dihydroorotate from bicarbonate: step 2/3. Its function is as follows. Catalyzes the condensation of carbamoyl phosphate and aspartate to form carbamoyl aspartate and inorganic phosphate, the committed step in the de novo pyrimidine nucleotide biosynthesis pathway. This is Aspartate carbamoyltransferase catalytic subunit from Methylorubrum populi (strain ATCC BAA-705 / NCIMB 13946 / BJ001) (Methylobacterium populi).